The primary structure comprises 456 residues: MFS-type transporter ppzB (456 aa).

A run of 5 helical transmembrane segments spans residues 1-21, 38-58, 72-92, 125-145, and 154-174; these read MGLF…PFIM, GFLA…GWAA, VFLF…LLVV, IGTI…LGGV, and AVFA…GLVI. Residues 206-225 form a disordered region; that stretch reads EAQERTHEGTPLLPQDDDDD. The next 6 helical transmembrane spans lie at 255 to 275, 284 to 304, 318 to 338, 348 to 368, 398 to 418, and 427 to 447; these read LAML…ATVP, FSSL…FALG, AAAT…GLPE, VALF…VTSP, FGFS…LGGV, and VMGA…FLFV.

The protein belongs to the major facilitator superfamily. TCR/Tet family.

It localises to the membrane. Functionally, MFS-type transporter; part of the gene cluster that mediates the biosynthesis of pyrrolopyrazines, secondary metabolites showing insecticidal activity. Probably involved in the secretion of peramine and other pyrrolopyrazines. The polypeptide is MFS-type transporter ppzB (ppzB) (Metarhizium majus (strain ARSEF 297)).